The following is a 273-amino-acid chain: NH(3)-dependent NAD(+) synthetase (273 aa).

47–54 (GISGGQDS) contributes to the ATP binding site. A Mg(2+)-binding site is contributed by Asp-53. Arg-139 provides a ligand contact to deamido-NAD(+). Thr-159 contributes to the ATP binding site. A Mg(2+)-binding site is contributed by Glu-164. Deamido-NAD(+) is bound by residues Lys-172 and Asp-179. Residues Lys-188 and Thr-210 each coordinate ATP. 259 to 260 (HK) is a deamido-NAD(+) binding site.

It belongs to the NAD synthetase family. In terms of assembly, homodimer.

It carries out the reaction deamido-NAD(+) + NH4(+) + ATP = AMP + diphosphate + NAD(+) + H(+). It functions in the pathway cofactor biosynthesis; NAD(+) biosynthesis; NAD(+) from deamido-NAD(+) (ammonia route): step 1/1. Its function is as follows. Catalyzes the ATP-dependent amidation of deamido-NAD to form NAD. Uses ammonia as a nitrogen source. This Staphylococcus aureus (strain COL) protein is NH(3)-dependent NAD(+) synthetase.